A 212-amino-acid chain; its full sequence is MRTLWDITPAVDTATPVWPGDTPVGIERVWRMEAGSPVNVARLTLSPHTGAHTDAPLHYDAEGAAIGDVPLDAYLGRCRVIHCIGASPVVTPQHLTGSLDDLPPRVLLRTYRNAPTNVWDSAFCAVAPDTIDLLASRGVKLIGIDTPSLDPQESKTMDAHHRIRAHRMAILEGIVLDEVAAGDYELIALPLKLTTLDASPVRAILRALPESH.

Residue W18 coordinates substrate. Residues H48, H52, and D54 each contribute to the Zn(2+) site. H58 serves as the catalytic Proton donor/acceptor. Positions 160 and 172 each coordinate Zn(2+).

It belongs to the Cyclase 1 superfamily. KynB family. In terms of assembly, homodimer. Zn(2+) is required as a cofactor.

The catalysed reaction is N-formyl-L-kynurenine + H2O = L-kynurenine + formate + H(+). The protein operates within amino-acid degradation; L-tryptophan degradation via kynurenine pathway; L-kynurenine from L-tryptophan: step 2/2. Its function is as follows. Catalyzes the hydrolysis of N-formyl-L-kynurenine to L-kynurenine, the second step in the kynurenine pathway of tryptophan degradation. The polypeptide is Kynurenine formamidase (Paraburkholderia xenovorans (strain LB400)).